We begin with the raw amino-acid sequence, 143 residues long: Large ribosomal subunit protein uL15 (143 aa).

Residues 1 to 57 are disordered; it reads MQLNNLKPAAGSKHAKRRVGRGIGSGLGKTAGRGHKGQKSRSGGFHKVGFEGGQMPL. Over residues 21-31 the composition is skewed to gly residues; that stretch reads RGIGSGLGKTA.

It belongs to the universal ribosomal protein uL15 family. As to quaternary structure, part of the 50S ribosomal subunit.

Binds to the 23S rRNA. The protein is Large ribosomal subunit protein uL15 of Ralstonia nicotianae (strain ATCC BAA-1114 / GMI1000) (Ralstonia solanacearum).